A 321-amino-acid polypeptide reads, in one-letter code: Phospho-N-acetylmuramoyl-pentapeptide-transferase (321 aa).

Transmembrane regions (helical) follow at residues 1–21, 50–70, 76–96, 112–132, 140–160, 176–196, 200–220, 225–245, 250–270, and 300–320; these read MIFIYAIIALLITFILVPILI, MGGLTFLISIIISSIIAIIFV, IILLLFVTIGFGLIGFIDDYI, FLAQIIIAVIFFVLSDVFHLV, IPFVNFDIPLSFAYVIFIVFW, GLATGLSIIGFAMYAVMSYML, AIGIFCIIMIFALLGFLPYNL, VFMGDTGSLALGGIFATISIM, LSLILIGFVFVVETLSVMLQV, and VVTVFWTVGLITGLIGLWIGV.

This sequence belongs to the glycosyltransferase 4 family. MraY subfamily. Requires Mg(2+) as cofactor.

The protein resides in the cell membrane. It catalyses the reaction UDP-N-acetyl-alpha-D-muramoyl-L-alanyl-gamma-D-glutamyl-L-lysyl-D-alanyl-D-alanine + di-trans,octa-cis-undecaprenyl phosphate = Mur2Ac(oyl-L-Ala-gamma-D-Glu-L-Lys-D-Ala-D-Ala)-di-trans,octa-cis-undecaprenyl diphosphate + UMP. The protein operates within cell wall biogenesis; peptidoglycan biosynthesis. Catalyzes the initial step of the lipid cycle reactions in the biosynthesis of the cell wall peptidoglycan: transfers peptidoglycan precursor phospho-MurNAc-pentapeptide from UDP-MurNAc-pentapeptide onto the lipid carrier undecaprenyl phosphate, yielding undecaprenyl-pyrophosphoryl-MurNAc-pentapeptide, known as lipid I. The chain is Phospho-N-acetylmuramoyl-pentapeptide-transferase from Staphylococcus epidermidis (strain ATCC 12228 / FDA PCI 1200).